A 251-amino-acid chain; its full sequence is Regulator of G-protein signaling 9-binding protein B (251 aa).

Residues 1–230 are Cytoplasmic-facing; sequence MPLQNVKVAD…NSKGCCSDGQ (230 aa). Coiled coils occupy residues 52–94 and 158–187; these read HLRD…ELER and ANKASLEYQEIEEEILKVDNMITDMEMKVN. Residues 231–250 form a helical; Anchor for type IV membrane protein membrane-spanning segment; that stretch reads LIVFLLLCGTALVAITLYSI. Position 251 (Leu251) is a topological domain, extracellular.

The protein belongs to the RGS7BP/RGS9BP family.

The protein localises to the membrane. Its function is as follows. Regulator of G protein-coupled receptor (GPCR) signaling. Probably acts by regulating the activity of some 'R7' family protein (RGS6, RGS7, RGS9 and/or RGS11). The chain is Regulator of G-protein signaling 9-binding protein B (rgs9bp-b) from Xenopus laevis (African clawed frog).